Here is a 167-residue protein sequence, read N- to C-terminus: NAD(P)H-quinone oxidoreductase subunit I, chloroplastic (167 aa).

4Fe-4S ferredoxin-type domains lie at 55–84 and 95–124; these read GRIH…VDWK and LNYS…MTEE. [4Fe-4S] cluster-binding residues include Cys-64, Cys-67, Cys-70, Cys-74, Cys-104, Cys-107, Cys-110, and Cys-114.

Belongs to the complex I 23 kDa subunit family. As to quaternary structure, NDH is composed of at least 16 different subunits, 5 of which are encoded in the nucleus. [4Fe-4S] cluster is required as a cofactor.

It localises to the plastid. Its subcellular location is the chloroplast thylakoid membrane. The catalysed reaction is a plastoquinone + NADH + (n+1) H(+)(in) = a plastoquinol + NAD(+) + n H(+)(out). The enzyme catalyses a plastoquinone + NADPH + (n+1) H(+)(in) = a plastoquinol + NADP(+) + n H(+)(out). Its function is as follows. NDH shuttles electrons from NAD(P)H:plastoquinone, via FMN and iron-sulfur (Fe-S) centers, to quinones in the photosynthetic chain and possibly in a chloroplast respiratory chain. The immediate electron acceptor for the enzyme in this species is believed to be plastoquinone. Couples the redox reaction to proton translocation, and thus conserves the redox energy in a proton gradient. The protein is NAD(P)H-quinone oxidoreductase subunit I, chloroplastic of Panax ginseng (Korean ginseng).